Here is a 261-residue protein sequence, read N- to C-terminus: Putative imidazole glycerol phosphate synthase subunit hisF2 (261 aa).

Aspartate 138 is an active-site residue.

It belongs to the HisA/HisF family. In terms of assembly, heterodimer of HisH and HisF.

It is found in the cytoplasm. The enzyme catalyses 5-[(5-phospho-1-deoxy-D-ribulos-1-ylimino)methylamino]-1-(5-phospho-beta-D-ribosyl)imidazole-4-carboxamide + L-glutamine = D-erythro-1-(imidazol-4-yl)glycerol 3-phosphate + 5-amino-1-(5-phospho-beta-D-ribosyl)imidazole-4-carboxamide + L-glutamate + H(+). The protein operates within amino-acid biosynthesis; L-histidine biosynthesis; L-histidine from 5-phospho-alpha-D-ribose 1-diphosphate: step 5/9. In terms of biological role, IGPS catalyzes the conversion of PRFAR and glutamine to IGP, AICAR and glutamate. The HisF subunit catalyzes the cyclization activity that produces IGP and AICAR from PRFAR using the ammonia provided by the HisH subunit. The sequence is that of Putative imidazole glycerol phosphate synthase subunit hisF2 (hisF2) from Prochlorococcus marinus (strain MIT 9313).